The primary structure comprises 213 residues: Small ribosomal subunit protein uS5 (213 aa).

Residues L49–V112 form the S5 DRBM domain.

This sequence belongs to the universal ribosomal protein uS5 family. In terms of assembly, part of the 30S ribosomal subunit. Contacts protein S4.

Its function is as follows. With S4 and S12 plays an important role in translational accuracy. This chain is Small ribosomal subunit protein uS5, found in Methanobrevibacter smithii (strain ATCC 35061 / DSM 861 / OCM 144 / PS).